The following is a 353-amino-acid chain: Cytochrome c biogenesis protein CcsA (353 aa).

A run of 8 helical transmembrane segments spans residues 15 to 35 (FAILFLTMLVYWGGAAFPNLP), 37 to 57 (LAALGTAGMAIANLCMATLLG), 68 to 88 (LSNLYESLFFLTWGITTVHLI), 97 to 117 (LVGVVTAPVAMLIAAFATMTL), 142 to 162 (VMMLSYSALMVGALLAIAFLI), 261 to 281 (IIGLGFPLLTIGIIAGGVWAN), 288 to 308 (WSWDPKETWALITWLVFAAYL), and 322 to 342 (AILAATGFVVVWICYLGVNLL).

The protein belongs to the CcmF/CycK/Ccl1/NrfE/CcsA family. As to quaternary structure, may interact with ccs1.

The protein localises to the cellular thylakoid membrane. In terms of biological role, required during biogenesis of c-type cytochromes (cytochrome c6 and cytochrome f) at the step of heme attachment. The chain is Cytochrome c biogenesis protein CcsA from Nostoc punctiforme (strain ATCC 29133 / PCC 73102).